Consider the following 371-residue polypeptide: Phospho-N-acetylmuramoyl-pentapeptide-transferase (371 aa).

10 helical membrane passes run 25–45 (YLTF…VAMG), 79–99 (TMGG…FADL), 104–124 (VWVV…DDYA), 139–159 (KLIA…IFAP), 179–199 (LVIN…AGFS), 210–230 (GLAI…AYLV), 247–267 (VGEL…FLWY), 274–294 (IFMG…IAVC), 299–319 (LVLG…MIQV), and 348–368 (TVVI…LATL).

This sequence belongs to the glycosyltransferase 4 family. MraY subfamily. The cofactor is Mg(2+).

It localises to the cell inner membrane. It carries out the reaction UDP-N-acetyl-alpha-D-muramoyl-L-alanyl-gamma-D-glutamyl-meso-2,6-diaminopimeloyl-D-alanyl-D-alanine + di-trans,octa-cis-undecaprenyl phosphate = di-trans,octa-cis-undecaprenyl diphospho-N-acetyl-alpha-D-muramoyl-L-alanyl-D-glutamyl-meso-2,6-diaminopimeloyl-D-alanyl-D-alanine + UMP. Its pathway is cell wall biogenesis; peptidoglycan biosynthesis. In terms of biological role, catalyzes the initial step of the lipid cycle reactions in the biosynthesis of the cell wall peptidoglycan: transfers peptidoglycan precursor phospho-MurNAc-pentapeptide from UDP-MurNAc-pentapeptide onto the lipid carrier undecaprenyl phosphate, yielding undecaprenyl-pyrophosphoryl-MurNAc-pentapeptide, known as lipid I. This is Phospho-N-acetylmuramoyl-pentapeptide-transferase from Caulobacter sp. (strain K31).